The following is a 727-amino-acid chain: Phosphoribosylformylglycinamidine synthase subunit PurL (727 aa).

His47 is a catalytic residue. ATP-binding residues include Tyr50 and Lys89. Position 91 (Glu91) interacts with Mg(2+). Substrate is bound by residues 92-95 (SHNH) and Arg114. His93 functions as the Proton acceptor in the catalytic mechanism. A Mg(2+)-binding site is contributed by Asp115. Gln238 serves as a coordination point for substrate. Asp266 serves as a coordination point for Mg(2+). Residue 310 to 312 (ESQ) participates in substrate binding. Residues Asp490 and Gly527 each contribute to the ATP site. Mg(2+) is bound at residue Asn528. Ser530 is a binding site for substrate.

Belongs to the FGAMS family. Monomer. Part of the FGAM synthase complex composed of 1 PurL, 1 PurQ and 2 PurS subunits.

The protein localises to the cytoplasm. The enzyme catalyses N(2)-formyl-N(1)-(5-phospho-beta-D-ribosyl)glycinamide + L-glutamine + ATP + H2O = 2-formamido-N(1)-(5-O-phospho-beta-D-ribosyl)acetamidine + L-glutamate + ADP + phosphate + H(+). It participates in purine metabolism; IMP biosynthesis via de novo pathway; 5-amino-1-(5-phospho-D-ribosyl)imidazole from N(2)-formyl-N(1)-(5-phospho-D-ribosyl)glycinamide: step 1/2. Functionally, part of the phosphoribosylformylglycinamidine synthase complex involved in the purines biosynthetic pathway. Catalyzes the ATP-dependent conversion of formylglycinamide ribonucleotide (FGAR) and glutamine to yield formylglycinamidine ribonucleotide (FGAM) and glutamate. The FGAM synthase complex is composed of three subunits. PurQ produces an ammonia molecule by converting glutamine to glutamate. PurL transfers the ammonia molecule to FGAR to form FGAM in an ATP-dependent manner. PurS interacts with PurQ and PurL and is thought to assist in the transfer of the ammonia molecule from PurQ to PurL. This Acidiphilium cryptum (strain JF-5) protein is Phosphoribosylformylglycinamidine synthase subunit PurL.